Here is an 835-residue protein sequence, read N- to C-terminus: MGNYKSRPTQTCSDEWKKKVSESYAIIIERLEDNLQIKENEFQELRHIFGSDEAFSEVSLNYRTERGLSLLHLCCVCGGNKSHIRALMLKGLRPSRLTRNGFPALHLAVYKDSPELITSLLHSGADVQQVGYGGLTALHIAAIAGHPEAAEVLLQHGANVNVQDAVFFTPLHIAAYYGHEQVTSVLLKFGADVNVSGEVGDRPLHLASAKGFFNIVKLLVEEGSKADVNAQDNEDHVPLHFCSRFGHHNIVSYLLQSDLEVQPHVINIYGDTPLHLACYNGNFEVAKEIVQVTGTESLTKENIFSETAFHSACTYGKNIDLVKFLLDQNAVNINHRGRDGHTGLHSACYHGHIRLVQFLLDNGADMNLVACDPSRSSGEKDEQTCLMWAYEKGHDAIVTLLKHYKRPQEELPCNEYSQPGGDGSYVSVPSPLGKIKSMTKEKADVLLLRAELPSRFHLQLSEIEFHEIIGSGSFGKVYKGRCRNKIVAIKRYRANTYCSKSDVDMFCREVSILCQLNHPCVVQFVGACLDDPSQFAIVTQYISGGSLFSLLHEQKRILDLQSKLIIAVDVAKGMEYLHSLTQPIIHRDLNSHNILLYEDGHAVVADFGESRFLQSLDEDNMTKQPGNLRWMAPEVFTQCTRYTIKADVFSYSLCLWELLTGEIPFAHLKPAAAAADMAYHHIRPPIGYSIPKPISSLLIRGWNACPEGRPEFSEVVSKLEECLCNVELMSPASSNSSGSLSPSSSSDCLLSRGGPGRSHVAALRSRFELEYALNARSYAGWSQSVGTHSNPGLSLEEMNRSTQYSTVDKYGYVSDPMSLTHLHSRQDDSNFEDSN.

The N-myristoyl glycine moiety is linked to residue Gly2. The stretch at 21–50 (SESYAIIIERLEDNLQIKENEFQELRHIFG) forms a coiled coil. ANK repeat units follow at residues 66 to 96 (RGLS…RPSR), 100 to 129 (NGFP…DVQQ), 133 to 162 (GGLT…NVNV), 166 to 195 (VFFT…DVNV), 199 to 228 (VGDR…KADV), 234 to 263 (EDHV…EVQP), 269 to 298 (YGDT…TESL), 304 to 335 (FSET…NINH), 339 to 368 (DGHT…DMNL), and 381 to 410 (DEQT…PQEE). Residues 463–723 (IEFHEIIGSG…EVVSKLEECL (261 aa)) enclose the Protein kinase domain. ATP-binding positions include 469–477 (IGSGSFGKV) and Lys490. The active-site Proton acceptor is Asp588.

This sequence belongs to the protein kinase superfamily. TKL Ser/Thr protein kinase family. MAP kinase kinase kinase subfamily. As to quaternary structure, interacts with TNNI3, ACTC, ACTA1, MYBPC3, AIP, FABP3 and HADHB. Mg(2+) is required as a cofactor. Post-translationally, autophosphorylated.

It is found in the nucleus. Its subcellular location is the cytoplasm. The enzyme catalyses L-seryl-[protein] + ATP = O-phospho-L-seryl-[protein] + ADP + H(+). It catalyses the reaction L-threonyl-[protein] + ATP = O-phospho-L-threonyl-[protein] + ADP + H(+). Its function is as follows. May play a role in cardiac physiology. This is Serine/threonine-protein kinase TNNI3K from Rattus norvegicus (Rat).